Here is a 214-residue protein sequence, read N- to C-terminus: Charged multivesicular body protein 2b (214 aa).

Residues Q25–R55 are a coiled coil. A disordered region spans residues M178–I199. Residues E202–G212 carry the MIT-interacting motif motif.

This sequence belongs to the SNF7 family. Probable core component of the endosomal sorting required for transport complex III (ESCRT-III). ESCRT-III components are thought to multimerize to form a flat lattice on the perimeter membrane of the endosome.

Its subcellular location is the cytoplasm. It is found in the cytosol. The protein resides in the late endosome membrane. Functionally, probable core component of the endosomal sorting required for transport complex III (ESCRT-III) which is involved in multivesicular bodies (MVBs) formation and sorting of endosomal cargo proteins into MVBs. MVBs contain intraluminal vesicles (ILVs) that are generated by invagination and scission from the limiting membrane of the endosome and mostly are delivered to lysosomes enabling degradation of membrane proteins, such as stimulated growth factor receptors, lysosomal enzymes and lipids. This is Charged multivesicular body protein 2b (chmp2b) from Danio rerio (Zebrafish).